A 376-amino-acid polypeptide reads, in one-letter code: Thymidine kinase (376 aa).

Residues 1–39 (MASYPCHQHASAFDQAARSRGHSNRRTALRPRRQQEATE) are disordered. The span at 19–32 (SRGHSNRRTALRPR) shows a compositional bias: basic residues. An ATP-binding site is contributed by 56–63 (GPHGMGKT). E83 (proton acceptor) is an active-site residue. Residues Y101 and Q125 each contribute to the substrate site. Residue R216 participates in ATP binding. Position 222 (R222) interacts with substrate.

The protein belongs to the herpesviridae thymidine kinase family. In terms of assembly, homodimer.

The catalysed reaction is thymidine + ATP = dTMP + ADP + H(+). Functionally, catalyzes the transfer of the gamma-phospho group of ATP to thymidine to generate dTMP in the salvage pathway of pyrimidine synthesis. The dTMP serves as a substrate for DNA polymerase during viral DNA replication. Allows the virus to be reactivated and to grow in non-proliferative cells lacking a high concentration of phosphorylated nucleic acid precursors. In Human herpesvirus 1 (strain CL101) (HHV-1), this protein is Thymidine kinase.